Consider the following 367-residue polypeptide: 2'-5'-oligoadenylate synthase 1A (367 aa).

The interval 14-61 is interaction with dsRNA; it reads DKFIEDYLLPDTTFGADVKSAVNVVCDFLKERCFQGAAHPVRVSKVVK. An ATP-binding site is contributed by Ser64. Positions 76, 78, and 149 each coordinate Mg(2+). Residues 201–211 are interaction with dsRNA; the sequence is QRPTKLKSLIR. ATP-binding residues include Arg211, Lys214, and Gln231. The S-geranylgeranyl cysteine moiety is linked to residue Cys364.

Belongs to the 2-5A synthase family. Monomer. Homotetramer. Interacts with OAS1D; the interaction inhibits OAS1A catalytic activity. It depends on Mg(2+) as a cofactor. C-terminal prenylated. Expressed in oocytes and granulosa cells of ovary, in intestine, stomach, spleen and uterus (at protein level). Expressed at high levels in the digestive tract and lymphoid organs. Expressed in ovary and spleen.

It is found in the cytoplasm. Its subcellular location is the mitochondrion. The protein resides in the nucleus. It localises to the microsome. The protein localises to the endoplasmic reticulum. It catalyses the reaction 3 ATP = 5'-triphosphoadenylyl-(2'-&gt;5')-adenylyl-(2'-&gt;5')-adenosine + 2 diphosphate. Produced as a latent enzyme which is activated by dsRNA generated during the course of viral infection. The dsRNA activator must be at least 15 nucleotides long, and no modification of the 2'-hydroxyl group is tolerated. ssRNA or dsDNA do not act as activators. In terms of biological role, interferon-induced, dsRNA-activated antiviral enzyme which plays a critical role in cellular innate antiviral response. In addition, it may also play a role in other cellular processes such as apoptosis, cell growth, differentiation and gene regulation. Synthesizes higher oligomers of 2'-5'-oligoadenylates (2-5A) from ATP which then bind to the inactive monomeric form of ribonuclease L (RNase L) leading to its dimerization and subsequent activation. Activation of RNase L leads to degradation of cellular as well as viral RNA, resulting in the inhibition of protein synthesis, thus terminating viral replication. Can mediate the antiviral effect via the classical RNase L-dependent pathway or an alternative antiviral pathway independent of RNase L. This chain is 2'-5'-oligoadenylate synthase 1A (Oas1a), found in Mus musculus (Mouse).